The primary structure comprises 215 residues: UPF0441 protein SG0265 (215 aa).

This sequence belongs to the UPF0441 family.

In Sodalis glossinidius (strain morsitans), this protein is UPF0441 protein SG0265.